A 98-amino-acid chain; its full sequence is DNA-directed RNA polymerase subunit omega (98 aa).

It belongs to the RNA polymerase subunit omega family. In terms of assembly, the RNAP catalytic core consists of 2 alpha, 1 beta, 1 beta' and 1 omega subunit. When a sigma factor is associated with the core the holoenzyme is formed, which can initiate transcription.

It catalyses the reaction RNA(n) + a ribonucleoside 5'-triphosphate = RNA(n+1) + diphosphate. Its function is as follows. Promotes RNA polymerase assembly. Latches the N- and C-terminal regions of the beta' subunit thereby facilitating its interaction with the beta and alpha subunits. In Xylella fastidiosa (strain M12), this protein is DNA-directed RNA polymerase subunit omega.